The sequence spans 212 residues: Adenylate kinase (212 aa).

10–15 (GAGKGT) is a binding site for ATP. Residues 30–59 (AIGDIFRTIIKTSTSEAELINNYVKQGELI) are NMP. Residues Arg-36, 57–59 (ELI), 85–88 (GYPR), and Gln-92 contribute to the AMP site. The interval 122–160 (GRYSCKNCGKIYNRYFLQPKTDNVCDVCGSSTFDYRKDD) is LID. Arg-123 serves as a coordination point for ATP. Zn(2+) contacts are provided by Cys-126 and Cys-129. Residue 132–133 (IY) participates in ATP binding. The Zn(2+) site is built by Cys-146 and Cys-149. Arg-157 and Arg-168 together coordinate AMP. Residue Lys-196 participates in ATP binding.

The protein belongs to the adenylate kinase family. In terms of assembly, monomer.

It is found in the cytoplasm. It catalyses the reaction AMP + ATP = 2 ADP. The protein operates within purine metabolism; AMP biosynthesis via salvage pathway; AMP from ADP: step 1/1. In terms of biological role, catalyzes the reversible transfer of the terminal phosphate group between ATP and AMP. Plays an important role in cellular energy homeostasis and in adenine nucleotide metabolism. The chain is Adenylate kinase from Rickettsia africae (strain ESF-5).